A 361-amino-acid chain; its full sequence is Outer membrane protein P2 (361 aa).

An N-terminal signal peptide occupies residues 1 to 20; the sequence is MKKTLAALIVGAFAASAANA.

The protein belongs to the Gram-negative porin family. As to quaternary structure, homotrimer.

The protein resides in the cell outer membrane. Functionally, forms pores that allow passive diffusion of small molecules across the outer membrane. In Haemophilus influenzae, this protein is Outer membrane protein P2 (ompP2).